We begin with the raw amino-acid sequence, 301 residues long: Acetylglutamate kinase (301 aa).

Substrate-binding positions include 71–72, Arg93, and Asn198; that span reads GG.

The protein belongs to the acetylglutamate kinase family. ArgB subfamily.

Its subcellular location is the cytoplasm. It catalyses the reaction N-acetyl-L-glutamate + ATP = N-acetyl-L-glutamyl 5-phosphate + ADP. It functions in the pathway amino-acid biosynthesis; L-arginine biosynthesis; N(2)-acetyl-L-ornithine from L-glutamate: step 2/4. Catalyzes the ATP-dependent phosphorylation of N-acetyl-L-glutamate. In Zymomonas mobilis subsp. mobilis (strain ATCC 31821 / ZM4 / CP4), this protein is Acetylglutamate kinase.